The chain runs to 463 residues: Fumarate hydratase class II (463 aa).

Residues 97–99 (SGT), 128–131 (HPND), 138–140 (SSN), and T186 contribute to the substrate site. Catalysis depends on H187, which acts as the Proton donor/acceptor. S317 is an active-site residue. Residues S318 and 323 to 325 (KVN) each bind substrate.

This sequence belongs to the class-II fumarase/aspartase family. Fumarase subfamily. As to quaternary structure, homotetramer.

Its subcellular location is the cytoplasm. It catalyses the reaction (S)-malate = fumarate + H2O. It participates in carbohydrate metabolism; tricarboxylic acid cycle; (S)-malate from fumarate: step 1/1. In terms of biological role, involved in the TCA cycle. Catalyzes the stereospecific interconversion of fumarate to L-malate. This is Fumarate hydratase class II from Campylobacter jejuni subsp. jejuni serotype O:2 (strain ATCC 700819 / NCTC 11168).